The following is a 21-amino-acid chain: Maculatin-1.1 (21 aa).

Phe-21 is modified (phenylalanine amide).

In terms of tissue distribution, expressed by the skin dorsal glands.

It localises to the secreted. In terms of biological role, maculatin-1.1 shows significant antibacterial activity against Gram-positive bacteria, less against Gram-negative bacteria. Maculatin-1.1.1 is inactive. This Ranoidea genimaculata (Brown-spotted tree frog) protein is Maculatin-1.1.